The sequence spans 830 residues: Outer dense fiber protein 2 (830 aa).

Phosphoserine is present on residues Ser-73 and Ser-74. Thr-92 is subject to Phosphothreonine. Ser-95 bears the Phosphoserine; by TSSK4 mark. Phosphoserine occurs at positions 106 and 109. Thr-110 bears the Phosphothreonine mark. Phosphoserine occurs at positions 115 and 129. Lys-138 participates in a covalent cross-link: Glycyl lysine isopeptide (Lys-Gly) (interchain with G-Cter in SUMO2). Ser-139 is subject to Phosphoserine. The stretch at 144 to 217 forms a coiled coil; it reads QKGERQMAKR…MSKLVEAEMD (74 aa). At Thr-231 the chain carries Phosphothreonine. 2 coiled-coil regions span residues 245 to 423 and 461 to 798; these read DINT…AEQL and EIIV…NYVQ. Ser-261 and Ser-632 each carry phosphoserine. The interval 537-701 is interaction with BBOF1; the sequence is KNYEGMIDNY…EAIHQAQLRL (165 aa).

The protein belongs to the ODF2 family. Self-associates. Associates with microtubules and forms a fibrillar structure partially linked to the microtubule network. Interacts via its C-terminus with PLK1. Interacts with ODF1. Interacts with MARK4; the interaction is required for localization of ODF2 to centrioles. Interacts with TSSK4. Interacts with AKNA. Interacts with CFAP58. Interacts with BBOF1. Interacts with CCDC38. Interacts with CCDC42. Tyrosine phosphorylated. Phosphorylated on Ser-95 by TSSK4. As to expression, testis-specific (at protein level). Expressed in spermatids at tubular stage V of the spermatogenic cycle. Highly expressed in the cytoplasm of elongating spermatids (tubular stages X/XI). In step 14/15 spermatids of tubular stage III/IV low expression detected. No expression detected in other testicular cells as well as the early round of spermatids.

The protein resides in the cytoplasm. It localises to the cytoskeleton. Its subcellular location is the microtubule organizing center. The protein localises to the centrosome. It is found in the cell projection. The protein resides in the cilium. It localises to the centriole. Its subcellular location is the spindle pole. The protein localises to the flagellum. Functionally, seems to be a major component of sperm tail outer dense fibers (ODF). ODFs are filamentous structures located on the outside of the axoneme in the midpiece and principal piece of the mammalian sperm tail and may help to maintain the passive elastic structures and elastic recoil of the sperm tail. May have a modulating influence on sperm motility. Functions as a general scaffold protein that is specifically localized at the distal/subdistal appendages of mother centrioles. Component of the centrosome matrix required for the localization of PLK1 and NIN to the centrosomes. Required for the formation and/or maintenance of normal CETN1 assembly. This is Outer dense fiber protein 2 (Odf2) from Mus musculus (Mouse).